The chain runs to 479 residues: MNAAVMTSPTNFSDYVIADLSLSAWGDKEIRIAETEMPGLMAIREEFAAAQPLKGARITGSIHMTIQTAVLIQTLEALGAKVRWASCNIYSTQDHAAAAIAAAGTPVFAVKGETLDDYWEYTHRIFEWPNDDKGAPVYSNMILDDGGDATLLLHLGTRAEKDASVLNNPGSEEEICLFNSIKKHLAVDATWYSKRLPQILGVTEETTTGVHRLYQMHKEGKLAFPAINVNDSVTKSKFDNLYGCRESLVDGIKRATDVMIAGKVAVIAGYGDVGKGSAQAMRALSAQVWVTEIDPICALQAAMEGYRVVTMEYAAEHGDIFVTCTGNYHVITHEHMKKMKDQAIVCNIGHFDNEIEVAALKQYTWENIKPQVDHIIFPDGKRIILLAEGRLVNLGCGTGHPSYVMSSSFANQTIAQIELYANTKNYPVGVYTLPKHLDEKVARLQLKKLNAQLTTLTTEQANYIGVQQTGPYKPEHYRY.

Residues Thr65, Asp145, and Glu205 each contribute to the substrate site. 206-208 (TTT) is an NAD(+) binding site. Substrate contacts are provided by Lys235 and Asp239. Residues Asn240, 269-274 (GYGDVG), Glu292, Asn327, 348-350 (IGH), and Asn393 each bind NAD(+).

This sequence belongs to the adenosylhomocysteinase family. The cofactor is NAD(+).

The protein localises to the cytoplasm. It catalyses the reaction S-adenosyl-L-homocysteine + H2O = L-homocysteine + adenosine. Its pathway is amino-acid biosynthesis; L-homocysteine biosynthesis; L-homocysteine from S-adenosyl-L-homocysteine: step 1/1. Functionally, may play a key role in the regulation of the intracellular concentration of adenosylhomocysteine. The protein is Adenosylhomocysteinase of Janthinobacterium sp. (strain Marseille) (Minibacterium massiliensis).